Here is a 518-residue protein sequence, read N- to C-terminus: Wax ester synthase/diacylglycerol acyltransferase 6 (518 aa).

The span at 1–17 (MEIKTRRDTSETSVRKD) shows a compositional bias: basic and acidic residues. Residues 1–29 (MEIKTRRDTSETSVRKDDEEEVEEEQPLS) are disordered. The Cytoplasmic portion of the chain corresponds to 1 to 213 (MEIKTRRDTS…LMAGSRGDSR (213 aa)). Catalysis depends on histidine 163, which acts as the Proton acceptor. The tract at residues 185-205 (PDELPSLPNQNRSSSRSSRLM) is disordered. The helical transmembrane segment at 214–234 (FLWLVMVIWSAIMLVLNTVCD) threads the bilayer. Topologically, residues 235–518 (ALEFIATTMF…VQERDSRSLD (284 aa)) are lumenal. N-linked (GlcNAc...) asparagine glycosylation is present at asparagine 430.

The protein in the N-terminal section; belongs to the long-chain O-acyltransferase family. As to expression, expressed in roots, stems, leaves, flowers and siliques.

Its subcellular location is the cell membrane. The protein resides in the endoplasmic reticulum membrane. It is found in the golgi apparatus membrane. The catalysed reaction is an acyl-CoA + a 1,2-diacyl-sn-glycerol = a triacyl-sn-glycerol + CoA. It catalyses the reaction a long chain fatty alcohol + a fatty acyl-CoA = a wax ester + CoA. It participates in glycerolipid metabolism; triacylglycerol biosynthesis. Its pathway is lipid metabolism. In terms of biological role, bifunctional wax ester synthase/diacylglycerol acyltransferase that uses acyl-CoAs with 16, 18 and 20 carbons as substrates, preferably in combination with 16:0ol alcohol. Involved in cuticular wax biosynthesis. The polypeptide is Wax ester synthase/diacylglycerol acyltransferase 6 (Arabidopsis thaliana (Mouse-ear cress)).